The chain runs to 421 residues: D-amino acid dehydrogenase (421 aa).

3-17 (VLVLGGGVVGVTSAY) is an FAD binding site.

This sequence belongs to the DadA oxidoreductase family. FAD serves as cofactor.

The enzyme catalyses a D-alpha-amino acid + A + H2O = a 2-oxocarboxylate + AH2 + NH4(+). The protein operates within amino-acid degradation; D-alanine degradation; NH(3) and pyruvate from D-alanine: step 1/1. Oxidative deamination of D-amino acids. The sequence is that of D-amino acid dehydrogenase from Methylobacterium sp. (strain 4-46).